Reading from the N-terminus, the 381-residue chain is Alkanesulfonate monooxygenase (381 aa).

Belongs to the SsuD family. As to quaternary structure, homotetramer.

It catalyses the reaction an alkanesulfonate + FMNH2 + O2 = an aldehyde + FMN + sulfite + H2O + 2 H(+). Catalyzes the desulfonation of aliphatic sulfonates. The protein is Alkanesulfonate monooxygenase of Escherichia coli O17:K52:H18 (strain UMN026 / ExPEC).